Here is a 206-residue protein sequence, read N- to C-terminus: Small ribosomal subunit protein uS4 (206 aa).

In terms of domain architecture, S4 RNA-binding spans 96 to 156; that stretch reads CRLDNVVYRM…EKSKNQLRIA (61 aa).

It belongs to the universal ribosomal protein uS4 family. In terms of assembly, part of the 30S ribosomal subunit. Contacts protein S5. The interaction surface between S4 and S5 is involved in control of translational fidelity.

One of the primary rRNA binding proteins, it binds directly to 16S rRNA where it nucleates assembly of the body of the 30S subunit. In terms of biological role, with S5 and S12 plays an important role in translational accuracy. The protein is Small ribosomal subunit protein uS4 of Pseudomonas aeruginosa (strain LESB58).